Consider the following 446-residue polypeptide: Nuclear distribution protein nudF (446 aa).

The LisH domain occupies 9–41 (QAEELHKSMVAYLSSIKASQSSNTLREELGIGD). A coiled-coil region spans residues 60–86 (TGIARLQRKILDLESKITSLQAELDSV). WD repeat units lie at residues 113–154 (SHRD…RTLK), 156–196 (HMRG…ANIR), 200–240 (GHDH…CVRT), 243–282 (SNSIWFLDVSPSFDGKWLVAGGRDQAVTVWEVSSAEPRAA), 285–345 (GHDN…IKTL), 347–386 (GHDNWIRGLVFHPSGKYLFSVSDDKTIRCWDLSQEGRLVK), 391–430 (AHGHFISCIRWAPPPRNAAAEASETTNGVSKKAPTKPAFQ), and 432–446 (VIATGSADSCVRVFK).

This sequence belongs to the WD repeat LIS1/nudF family. As to quaternary structure, self-associates. Interacts with nudE and dynein.

It localises to the cytoplasm. Its subcellular location is the cytoskeleton. The protein resides in the spindle pole. Positively regulates the activity of the minus-end directed microtubule motor protein dynein. May enhance dynein-mediated microtubule sliding by targeting dynein to the microtubule plus end. Required for nuclear migration during vegetative growth as well as development. Required for retrograde early endosome (EE) transport from the hyphal tip. Required for localization of dynein to the mitotic spindle poles. Recruits additional proteins to the dynein complex at SPBs. The polypeptide is Nuclear distribution protein nudF (Aspergillus terreus (strain NIH 2624 / FGSC A1156)).